The sequence spans 312 residues: Taste receptor type 2 member 9 (312 aa).

Topologically, residues 1-9 are extracellular; the sequence is MPSAIEAIY. A helical membrane pass occupies residues 10–32; the sequence is IILIAGELTIGIWGNGFIVLVNC. Topologically, residues 33-52 are cytoplasmic; that stretch reads IDWLKRRDISLIDIILISLA. The helical transmembrane segment at 53–72 threads the bilayer; it reads ISRICLLCVISLDGFFMLLF. Over 73-86 the chain is Extracellular; the sequence is PGTYGNSVLVSIVN. The helical transmembrane segment at 87-109 threads the bilayer; sequence VVWTFANNSSLWFTSCLSIFYLL. Topologically, residues 110–128 are cytoplasmic; that stretch reads KIANISHPFFFWLKLKINK. The chain crosses the membrane as a helical span at residues 129-146; it reads VMLAILLGSFLISLIISV. The Extracellular segment spans residues 147–180; it reads PKNDDMWYHLFKVSHEENITWKFKVSKIPGTFKQ. Asn-164 carries an N-linked (GlcNAc...) asparagine glycan. Residues 181–203 form a helical membrane-spanning segment; sequence LTLNLGVMVPFILCLISFFLLLF. At 204–234 the chain is on the cytoplasmic side; that stretch reads SLVRHTKQIRLHATGFRDPSTEAHMRAIKAV. A helical transmembrane segment spans residues 235–257; that stretch reads IIFLLLLIVYYPVFLVMTSSALI. Residues 258 to 261 lie on the Extracellular side of the membrane; the sequence is PQGK. The chain crosses the membrane as a helical span at residues 262-284; it reads LVLMIGDIVTVIFPSSHSFILIM. The Cytoplasmic segment spans residues 285 to 312; sequence GNSKLREAFLKMLRFVKCFLRRRKPFVP.

It belongs to the G-protein coupled receptor T2R family. Expressed in subsets of taste receptor cells of the tongue and palate epithelium and exclusively in gustducin-positive cells.

The protein localises to the membrane. Its function is as follows. Gustducin-coupled receptor implicated in the perception of bitter compounds in the oral cavity and the gastrointestinal tract. Signals through PLCB2 and the calcium-regulated cation channel TRPM5. In Homo sapiens (Human), this protein is Taste receptor type 2 member 9 (TAS2R9).